A 331-amino-acid polypeptide reads, in one-letter code: Lipoyl synthase (331 aa).

Residues C74, C79, C85, C100, C104, C107, and S314 each coordinate [4Fe-4S] cluster. The Radical SAM core domain maps to 85–303 (CFGKGTATFM…ETEAYKMGFT (219 aa)).

It belongs to the radical SAM superfamily. Lipoyl synthase family. [4Fe-4S] cluster is required as a cofactor.

The protein localises to the cytoplasm. The catalysed reaction is [[Fe-S] cluster scaffold protein carrying a second [4Fe-4S](2+) cluster] + N(6)-octanoyl-L-lysyl-[protein] + 2 oxidized [2Fe-2S]-[ferredoxin] + 2 S-adenosyl-L-methionine + 4 H(+) = [[Fe-S] cluster scaffold protein] + N(6)-[(R)-dihydrolipoyl]-L-lysyl-[protein] + 4 Fe(3+) + 2 hydrogen sulfide + 2 5'-deoxyadenosine + 2 L-methionine + 2 reduced [2Fe-2S]-[ferredoxin]. It participates in protein modification; protein lipoylation via endogenous pathway; protein N(6)-(lipoyl)lysine from octanoyl-[acyl-carrier-protein]: step 2/2. Its function is as follows. Catalyzes the radical-mediated insertion of two sulfur atoms into the C-6 and C-8 positions of the octanoyl moiety bound to the lipoyl domains of lipoate-dependent enzymes, thereby converting the octanoylated domains into lipoylated derivatives. In Leptothrix cholodnii (strain ATCC 51168 / LMG 8142 / SP-6) (Leptothrix discophora (strain SP-6)), this protein is Lipoyl synthase.